The primary structure comprises 440 residues: L-seryl-tRNA(Sec) selenium transferase (440 aa).

Lys-282 is subject to N6-(pyridoxal phosphate)lysine.

This sequence belongs to the SelA family. It depends on pyridoxal 5'-phosphate as a cofactor.

It is found in the cytoplasm. It catalyses the reaction L-seryl-tRNA(Sec) + selenophosphate + H(+) = L-selenocysteinyl-tRNA(Sec) + phosphate. Its pathway is aminoacyl-tRNA biosynthesis; selenocysteinyl-tRNA(Sec) biosynthesis; selenocysteinyl-tRNA(Sec) from L-seryl-tRNA(Sec) (bacterial route): step 1/1. Functionally, converts seryl-tRNA(Sec) to selenocysteinyl-tRNA(Sec) required for selenoprotein biosynthesis. This chain is L-seryl-tRNA(Sec) selenium transferase, found in Campylobacter jejuni subsp. jejuni serotype O:2 (strain ATCC 700819 / NCTC 11168).